The primary structure comprises 66 residues: Large ribosomal subunit protein bL33c (66 aa).

The protein belongs to the bacterial ribosomal protein bL33 family.

The protein resides in the plastid. Its subcellular location is the chloroplast. The sequence is that of Large ribosomal subunit protein bL33c from Nandina domestica (Heavenly bamboo).